Here is a 341-residue protein sequence, read N- to C-terminus: Acetylpolyamine amidohydrolase (341 aa).

Substrate contacts are provided by Tyr19, Glu106, and Glu117. Residue His159 is the Proton donor/acceptor of the active site. The Zn(2+) site is built by Asp195, His197, and Asp284. Tyr323 is a substrate binding site.

It belongs to the histone deacetylase family. In terms of assembly, homodimer. It depends on Zn(2+) as a cofactor.

It carries out the reaction N-acetylputrescine + H2O = putrescine + acetate. The catalysed reaction is N-acetylcadaverine + H2O = cadaverine + acetate. The enzyme catalyses N(1)-acetylspermine + H2O = spermine + acetate. It catalyses the reaction N(1)-acetylspermidine + H2O = spermidine + acetate. It carries out the reaction N(8)-acetylspermidine + H2O = spermidine + acetate. It participates in amine and polyamine metabolism. Zinc ions inhibit enzyme activity in a dose-dependent manner. Inhibited by KCl at concentrations above 10 mM. Inhibited by o-oxyquinoline in vitro, suggesting that it is a metalloprotein. Inhibited by various substrate N(8)-acetylspermidine analogs bearing different metal-binding groups such as trifluoromethylketone, thiol, or hydroxamate, and by hydroxamate analogs of short-chain acetyldiamines. Functionally, involved in polyamine metabolism. Catalyzes the deacetylation of various acetylated polyamines such as N-acetylputrescine, N-acetylcadaverine, N(1)-acetylspermine, N(1)-acetylspermidine and N(8)-acetylspermidine. In vitro, is also able to deacetylate L-Lys(epsilon-acetyl)coumarin, but has very low activity towards the larger tetrapeptide N-acetyl-L-Arg-L-His-L-Lys(epsilon-acetyl)-L-Lys(epsilon-acetyl)coumarin. The chain is Acetylpolyamine amidohydrolase from Mycoplana ramosa (Mycoplana bullata).